The primary structure comprises 271 residues: Putative phosphoenolpyruvate synthase regulatory protein (271 aa).

152-159 (GVSRCGKT) contacts ADP.

This sequence belongs to the pyruvate, phosphate/water dikinase regulatory protein family. PSRP subfamily.

It carries out the reaction [pyruvate, water dikinase] + ADP = [pyruvate, water dikinase]-phosphate + AMP + H(+). The enzyme catalyses [pyruvate, water dikinase]-phosphate + phosphate + H(+) = [pyruvate, water dikinase] + diphosphate. Bifunctional serine/threonine kinase and phosphorylase involved in the regulation of the phosphoenolpyruvate synthase (PEPS) by catalyzing its phosphorylation/dephosphorylation. The chain is Putative phosphoenolpyruvate synthase regulatory protein from Legionella pneumophila (strain Paris).